We begin with the raw amino-acid sequence, 266 residues long: Tryptophan synthase alpha chain (266 aa).

Residues Glu-49 and Asp-60 each act as proton acceptor in the active site.

Belongs to the TrpA family. As to quaternary structure, tetramer of two alpha and two beta chains.

The enzyme catalyses (1S,2R)-1-C-(indol-3-yl)glycerol 3-phosphate + L-serine = D-glyceraldehyde 3-phosphate + L-tryptophan + H2O. It participates in amino-acid biosynthesis; L-tryptophan biosynthesis; L-tryptophan from chorismate: step 5/5. Its function is as follows. The alpha subunit is responsible for the aldol cleavage of indoleglycerol phosphate to indole and glyceraldehyde 3-phosphate. The protein is Tryptophan synthase alpha chain of Synechococcus elongatus (strain ATCC 33912 / PCC 7942 / FACHB-805) (Anacystis nidulans R2).